Reading from the N-terminus, the 518-residue chain is DNA-binding protein Ikaros (518 aa).

The tract at residues 1–51 (METDEAQDMSQVSGKESPPISDVPDDADEPMPVPEDLSTTTGGQQSVKNER) is disordered. Residues 37–47 (LSTTTGGQQSV) are compositionally biased toward polar residues. 4 C2H2-type zinc fingers span residues 117-139 (LKCDICGIICIGPNVLMVHNRSH), 145-167 (FQCNQCGASFTQKGNLLRHIKLH), 173-195 (FKCHLCNYACRRRDALTGHLRTH), and 201-224 (HKCGYCGRSYKQRSSLEEHKERCH). Residues 381-405 (SVSSERDASPSNSCQDSTDTESNNE) form a disordered region. 2 consecutive C2H2-type zinc fingers follow at residues 461–483 (YKCEHCRVLFLDHVMYTIHMGCH) and 489–513 (FECNMCGYHSQDRYEFSSHITRGEH).

It belongs to the Ikaros C2H2-type zinc-finger protein family. Expressed in embryonic hematopoietic organs such as the bursa of Fabricius, thymus and spleen. In the adult, expressed in spleen, thymus, bursa and peripheral blood leukocytes.

The protein resides in the nucleus. Binds and activates the enhancer (delta-A element) of the CD3-delta gene. Functions in the specification and the maturation of the T-lymphocyte. Also interacts with a critical control element in the TDT (terminal deoxynucleotidyltransferase) promoter as well as with the promoters for other genes expressed during early stages of B- and T-cell development. Function is isoform-specific and is modulated by dominant-negative inactive isoforms. The polypeptide is DNA-binding protein Ikaros (IKZF1) (Gallus gallus (Chicken)).